Reading from the N-terminus, the 63-residue chain is Protein DsrB (63 aa).

Belongs to the DsrB family.

This Yersinia pseudotuberculosis serotype O:3 (strain YPIII) protein is Protein DsrB.